We begin with the raw amino-acid sequence, 559 residues long: Dihydroxy-acid dehydratase (559 aa).

Position 52 (C52) interacts with [2Fe-2S] cluster. Mg(2+) is bound at residue D84. Residue C125 coordinates [2Fe-2S] cluster. Positions 126 and 127 each coordinate Mg(2+). At K127 the chain carries N6-carboxylysine. Position 197 (C197) interacts with [2Fe-2S] cluster. E447 provides a ligand contact to Mg(2+). S473 acts as the Proton acceptor in catalysis.

The protein belongs to the IlvD/Edd family. As to quaternary structure, homodimer. [2Fe-2S] cluster serves as cofactor. Mg(2+) is required as a cofactor.

The enzyme catalyses (2R)-2,3-dihydroxy-3-methylbutanoate = 3-methyl-2-oxobutanoate + H2O. It carries out the reaction (2R,3R)-2,3-dihydroxy-3-methylpentanoate = (S)-3-methyl-2-oxopentanoate + H2O. The protein operates within amino-acid biosynthesis; L-isoleucine biosynthesis; L-isoleucine from 2-oxobutanoate: step 3/4. It functions in the pathway amino-acid biosynthesis; L-valine biosynthesis; L-valine from pyruvate: step 3/4. In terms of biological role, functions in the biosynthesis of branched-chain amino acids. Catalyzes the dehydration of (2R,3R)-2,3-dihydroxy-3-methylpentanoate (2,3-dihydroxy-3-methylvalerate) into 2-oxo-3-methylpentanoate (2-oxo-3-methylvalerate) and of (2R)-2,3-dihydroxy-3-methylbutanoate (2,3-dihydroxyisovalerate) into 2-oxo-3-methylbutanoate (2-oxoisovalerate), the penultimate precursor to L-isoleucine and L-valine, respectively. This chain is Dihydroxy-acid dehydratase, found in Roseiflexus sp. (strain RS-1).